The following is a 294-amino-acid chain: Protease HtpX homolog 2 (294 aa).

A run of 2 helical transmembrane segments spans residues 15–35 (MLFT…FLSY) and 36–56 (YGTS…AQYF). Residue His140 coordinates Zn(2+). Residue Glu141 is part of the active site. His144 serves as a coordination point for Zn(2+). 2 consecutive transmembrane segments (helical) span residues 151–171 (AVLT…RYSL) and 185–205 (GGIM…FLLI). Glu213 serves as a coordination point for Zn(2+).

Belongs to the peptidase M48B family. Zn(2+) serves as cofactor.

Its subcellular location is the cell membrane. The chain is Protease HtpX homolog 2 from Methanosarcina mazei (strain ATCC BAA-159 / DSM 3647 / Goe1 / Go1 / JCM 11833 / OCM 88) (Methanosarcina frisia).